Reading from the N-terminus, the 213-residue chain is Orotate phosphoribosyltransferase (213 aa).

Lys-26 lines the 5-phospho-alpha-D-ribose 1-diphosphate pocket. An orotate-binding site is contributed by 34–35 (FF). 5-phospho-alpha-D-ribose 1-diphosphate-binding positions include 72–73 (YK), Arg-99, Lys-100, Lys-103, His-105, and 124–132 (DDVITAGTA). Orotate-binding residues include Thr-128 and Arg-156.

This sequence belongs to the purine/pyrimidine phosphoribosyltransferase family. PyrE subfamily. Homodimer. Mg(2+) serves as cofactor.

The catalysed reaction is orotidine 5'-phosphate + diphosphate = orotate + 5-phospho-alpha-D-ribose 1-diphosphate. It functions in the pathway pyrimidine metabolism; UMP biosynthesis via de novo pathway; UMP from orotate: step 1/2. Functionally, catalyzes the transfer of a ribosyl phosphate group from 5-phosphoribose 1-diphosphate to orotate, leading to the formation of orotidine monophosphate (OMP). The polypeptide is Orotate phosphoribosyltransferase (Serratia proteamaculans (strain 568)).